Consider the following 208-residue polypeptide: Uracil phosphoribosyltransferase (208 aa).

Residues R78, R103, and 130-138 (DPMLATGGS) contribute to the 5-phospho-alpha-D-ribose 1-diphosphate site. Uracil contacts are provided by residues I193 and 198 to 200 (GDA). D199 is a 5-phospho-alpha-D-ribose 1-diphosphate binding site.

The protein belongs to the UPRTase family. Mg(2+) serves as cofactor.

It catalyses the reaction UMP + diphosphate = 5-phospho-alpha-D-ribose 1-diphosphate + uracil. The protein operates within pyrimidine metabolism; UMP biosynthesis via salvage pathway; UMP from uracil: step 1/1. With respect to regulation, allosterically activated by GTP. In terms of biological role, catalyzes the conversion of uracil and 5-phospho-alpha-D-ribose 1-diphosphate (PRPP) to UMP and diphosphate. The chain is Uracil phosphoribosyltransferase from Neisseria meningitidis serogroup B (strain ATCC BAA-335 / MC58).